We begin with the raw amino-acid sequence, 267 residues long: 4-hydroxy-tetrahydrodipicolinate reductase (267 aa).

NAD(+) is bound by residues 8–13 (GAAGRM) and aspartate 34. Position 35 (arginine 35) interacts with NADP(+). Residues 98–100 (GTT) and 122–125 (AANF) contribute to the NAD(+) site. Histidine 155 (proton donor/acceptor) is an active-site residue. Position 156 (histidine 156) interacts with (S)-2,3,4,5-tetrahydrodipicolinate. Residue lysine 159 is the Proton donor of the active site. Position 165–166 (165–166 (GT)) interacts with (S)-2,3,4,5-tetrahydrodipicolinate.

Belongs to the DapB family.

The protein localises to the cytoplasm. It carries out the reaction (S)-2,3,4,5-tetrahydrodipicolinate + NAD(+) + H2O = (2S,4S)-4-hydroxy-2,3,4,5-tetrahydrodipicolinate + NADH + H(+). The enzyme catalyses (S)-2,3,4,5-tetrahydrodipicolinate + NADP(+) + H2O = (2S,4S)-4-hydroxy-2,3,4,5-tetrahydrodipicolinate + NADPH + H(+). Its pathway is amino-acid biosynthesis; L-lysine biosynthesis via DAP pathway; (S)-tetrahydrodipicolinate from L-aspartate: step 4/4. Functionally, catalyzes the conversion of 4-hydroxy-tetrahydrodipicolinate (HTPA) to tetrahydrodipicolinate. This chain is 4-hydroxy-tetrahydrodipicolinate reductase, found in Pseudomonas entomophila (strain L48).